The primary structure comprises 147 residues: Prefoldin subunit alpha (147 aa).

It belongs to the prefoldin alpha subunit family. As to quaternary structure, heterohexamer of two alpha and four beta subunits.

It localises to the cytoplasm. Molecular chaperone capable of stabilizing a range of proteins. Seems to fulfill an ATP-independent, HSP70-like function in archaeal de novo protein folding. The polypeptide is Prefoldin subunit alpha (Methanocorpusculum labreanum (strain ATCC 43576 / DSM 4855 / Z)).